Reading from the N-terminus, the 349-residue chain is Phosphate acetyltransferase (349 aa).

Belongs to the phosphate acetyltransferase and butyryltransferase family.

It is found in the cytoplasm. It carries out the reaction acetyl-CoA + phosphate = acetyl phosphate + CoA. The protein operates within metabolic intermediate biosynthesis; acetyl-CoA biosynthesis; acetyl-CoA from acetate: step 2/2. In Rickettsia felis (strain ATCC VR-1525 / URRWXCal2) (Rickettsia azadi), this protein is Phosphate acetyltransferase (pta).